A 247-amino-acid chain; its full sequence is Adenosylcobinamide-GDP ribazoletransferase (247 aa).

The next 6 helical transmembrane spans lie at 34 to 54 (IVTF…VFVA), 59 to 79 (CGIP…TGGF), 113 to 133 (GGLA…ELAL), 138 to 158 (MLAA…LLMY), 171 to 193 (VFIG…ILAA), and 194 to 214 (ILMP…AIFI).

It belongs to the CobS family. The cofactor is Mg(2+).

Its subcellular location is the cell inner membrane. It carries out the reaction alpha-ribazole + adenosylcob(III)inamide-GDP = adenosylcob(III)alamin + GMP + H(+). The enzyme catalyses alpha-ribazole 5'-phosphate + adenosylcob(III)inamide-GDP = adenosylcob(III)alamin 5'-phosphate + GMP + H(+). Its pathway is cofactor biosynthesis; adenosylcobalamin biosynthesis; adenosylcobalamin from cob(II)yrinate a,c-diamide: step 7/7. In terms of biological role, joins adenosylcobinamide-GDP and alpha-ribazole to generate adenosylcobalamin (Ado-cobalamin). Also synthesizes adenosylcobalamin 5'-phosphate from adenosylcobinamide-GDP and alpha-ribazole 5'-phosphate. This Citrobacter koseri (strain ATCC BAA-895 / CDC 4225-83 / SGSC4696) protein is Adenosylcobinamide-GDP ribazoletransferase.